The primary structure comprises 948 residues: Isoleucine--tRNA ligase (948 aa).

A 'HIGH' region motif is present at residues 58 to 68 (PYANGDIHIGH). An L-isoleucyl-5'-AMP-binding site is contributed by Glu-566. Residues 607–611 (KMSKS) carry the 'KMSKS' region motif. Residue Lys-610 participates in ATP binding. Residues Cys-911, Cys-914, Cys-931, and Cys-934 each coordinate Zn(2+).

This sequence belongs to the class-I aminoacyl-tRNA synthetase family. IleS type 1 subfamily. In terms of assembly, monomer. Requires Zn(2+) as cofactor.

The protein localises to the cytoplasm. It carries out the reaction tRNA(Ile) + L-isoleucine + ATP = L-isoleucyl-tRNA(Ile) + AMP + diphosphate. Functionally, catalyzes the attachment of isoleucine to tRNA(Ile). As IleRS can inadvertently accommodate and process structurally similar amino acids such as valine, to avoid such errors it has two additional distinct tRNA(Ile)-dependent editing activities. One activity is designated as 'pretransfer' editing and involves the hydrolysis of activated Val-AMP. The other activity is designated 'posttransfer' editing and involves deacylation of mischarged Val-tRNA(Ile). In Vibrio vulnificus (strain YJ016), this protein is Isoleucine--tRNA ligase.